Reading from the N-terminus, the 514-residue chain is ATP synthase subunit alpha (514 aa).

170–177 provides a ligand contact to ATP; the sequence is GDRQIGKT.

Belongs to the ATPase alpha/beta chains family. As to quaternary structure, F-type ATPases have 2 components, CF(1) - the catalytic core - and CF(0) - the membrane proton channel. CF(1) has five subunits: alpha(3), beta(3), gamma(1), delta(1), epsilon(1). CF(0) has three main subunits: a(1), b(2) and c(9-12). The alpha and beta chains form an alternating ring which encloses part of the gamma chain. CF(1) is attached to CF(0) by a central stalk formed by the gamma and epsilon chains, while a peripheral stalk is formed by the delta and b chains.

Its subcellular location is the cell inner membrane. It catalyses the reaction ATP + H2O + 4 H(+)(in) = ADP + phosphate + 5 H(+)(out). Functionally, produces ATP from ADP in the presence of a proton gradient across the membrane. The alpha chain is a regulatory subunit. In Pseudomonas putida (strain W619), this protein is ATP synthase subunit alpha.